We begin with the raw amino-acid sequence, 221 residues long: MFGFHKPKMYRSIEGCCICRAKSSSSRFTDSKRYEKDFQSCFGLHETRSGDICNACVLLVKRWKKLPAGSKKNWNHVVDARAGPSLKTTLKPKKVKTLSGNRIKSNQISKLQKEFKRHNSDAHSTTSSASPAQSPCYSNQSDDGSDTEMASGSNRTPVFSFLDLTYWKRQKICCGIIYKGRFGEVLIDTHLFKPCCSNKKAAAEKPEEQGPEPLPISTQEW.

The span at 112–121 (QKEFKRHNSD) shows a compositional bias: basic and acidic residues. Disordered stretches follow at residues 112 to 152 (QKEF…MASG) and 201 to 221 (AAAE…TQEW). The span at 124-135 (STTSSASPAQSP) shows a compositional bias: low complexity. The span at 136–152 (CYSNQSDDGSDTEMASG) shows a compositional bias: polar residues.

It belongs to the SINHCAF family. Interacts with the Sin3/HDAC corepressor complex at least composed of BRMS1, BRMS1L, ING2, SAP30, SAP30L and HDAC1. Found in a complex composed of at least SINHCAF, SIN3A, HDAC1, SAP30, RBBP4, OGT and TET1. Interacts with SIN3A and OGT.

The protein resides in the nucleus. In terms of biological role, subunit of the Sin3 deacetylase complex (Sin3/HDAC), this subunit is important for the repression of genes encoding components of the TGF-beta signaling pathway. Core component of a SIN3A complex (composed of at least SINHCAF, SIN3A, HDAC1, SAP30, RBBP4, OGT and TET1) present in embryonic stem (ES) cells. Promotes the stability of SIN3A and its presence on chromatin and is essential for maintaining the potential of ES cells to proliferate rapidly, while ensuring a short G1-phase of the cell cycle, thereby preventing premature lineage priming. The chain is SIN3-HDAC complex-associated factor from Homo sapiens (Human).